The primary structure comprises 424 residues: Serine--tRNA ligase (424 aa).

230–232 (TAE) serves as a coordination point for L-serine. Residue 261–263 (RAE) participates in ATP binding. Glutamate 284 is a binding site for L-serine. 348 to 351 (EISS) provides a ligand contact to ATP. Serine 384 serves as a coordination point for L-serine.

It belongs to the class-II aminoacyl-tRNA synthetase family. Type-1 seryl-tRNA synthetase subfamily. Homodimer. The tRNA molecule binds across the dimer.

Its subcellular location is the cytoplasm. The catalysed reaction is tRNA(Ser) + L-serine + ATP = L-seryl-tRNA(Ser) + AMP + diphosphate + H(+). It catalyses the reaction tRNA(Sec) + L-serine + ATP = L-seryl-tRNA(Sec) + AMP + diphosphate + H(+). The protein operates within aminoacyl-tRNA biosynthesis; selenocysteinyl-tRNA(Sec) biosynthesis; L-seryl-tRNA(Sec) from L-serine and tRNA(Sec): step 1/1. Its function is as follows. Catalyzes the attachment of serine to tRNA(Ser). Is also able to aminoacylate tRNA(Sec) with serine, to form the misacylated tRNA L-seryl-tRNA(Sec), which will be further converted into selenocysteinyl-tRNA(Sec). This is Serine--tRNA ligase from Carboxydothermus hydrogenoformans (strain ATCC BAA-161 / DSM 6008 / Z-2901).